The following is a 93-amino-acid chain: Protein S100-A5 (93 aa).

EF-hand domains lie at 12 to 47 and 48 to 83; these read MVTT…LAEK and MKES…LCMA. The Ca(2+) site is built by Thr-28, Glu-33, Asp-61, Asn-63, Asp-65, Glu-67, and Glu-72.

This sequence belongs to the S-100 family. In terms of assembly, homodimer.

In terms of biological role, binds calcium, zinc and copper. One subunit can simultaneously bind 2 calcium ions or 2 copper ions plus 1 zinc ion. Calcium and copper ions compete for the same binding sites. The polypeptide is Protein S100-A5 (S100a5) (Mus musculus (Mouse)).